The chain runs to 526 residues: Tyrosine 2,3-aminomutase (526 aa).

Y41 acts as the Proton donor/acceptor in catalysis. Substrate is bound at residue H71. Positions 130 to 132 form a cross-link, 5-imidazolinone (Ala-Gly); that stretch reads ASG. A 2,3-didehydroalanine (Ser) modification is found at S131. The substrate site is built by N183 and R288.

The protein belongs to the TAL/TAM family. As to quaternary structure, homotetramer; dimer of dimers. Post-translationally, contains an active site 4-methylidene-imidazol-5-one (MIO), which is formed autocatalytically by cyclization and dehydration of residues Ala-Ser-Gly.

It catalyses the reaction L-tyrosine = 3-amino-3-(4-hydroxyphenyl)propanoate. The enzyme catalyses L-tyrosine = (E)-4-coumarate + NH4(+). Its function is as follows. Has aminomutase and, to a much lesser extent, ammonia-lyase activity. Primarily, catalyzes the rearrangement of L-tyrosine to S-beta-tyrosine, which is probably incorporated into secondary metabolite myxovalargin. The aminomutase activity exclusively produces S-beta-tyrosine. This chain is Tyrosine 2,3-aminomutase, found in Myxococcus sp. (strain Mx-B0).